The primary structure comprises 317 residues: MYNYLDFEKPVADLEGQILELKKLAQEQGSVEMSDEIRRLEKRSADALKDIYRKLTPWQKTQIARHPDRPHCLEYIDRLFTEFTPLAGDRKFANDEALQTGFGRFNGQAVAIIGQEKGSDTKTRLKHNFGSARPEGYRKAVRIMEMADRFQLPLITFVDTAGAYPGVSAEERGQAEAIARSTAECLRLRVPVISIIIGEGGSGGAIAIAVANRVYMLEHSIYSVISPEGAASILWHDSTRAKDAASSMRITAQDLFDLKVIDGVIPEPMGGAHRGKEAVIDAAGDIITASLRSMKDIDGETLKQERRQKFLEIGRNI.

The CoA carboxyltransferase C-terminal domain maps to 40-293 (LEKRSADALK…GDIITASLRS (254 aa)).

It belongs to the AccA family. In terms of assembly, acetyl-CoA carboxylase is a heterohexamer composed of biotin carboxyl carrier protein (AccB), biotin carboxylase (AccC) and two subunits each of ACCase subunit alpha (AccA) and ACCase subunit beta (AccD).

It is found in the cytoplasm. The catalysed reaction is N(6)-carboxybiotinyl-L-lysyl-[protein] + acetyl-CoA = N(6)-biotinyl-L-lysyl-[protein] + malonyl-CoA. It participates in lipid metabolism; malonyl-CoA biosynthesis; malonyl-CoA from acetyl-CoA: step 1/1. In terms of biological role, component of the acetyl coenzyme A carboxylase (ACC) complex. First, biotin carboxylase catalyzes the carboxylation of biotin on its carrier protein (BCCP) and then the CO(2) group is transferred by the carboxyltransferase to acetyl-CoA to form malonyl-CoA. This Brucella anthropi (strain ATCC 49188 / DSM 6882 / CCUG 24695 / JCM 21032 / LMG 3331 / NBRC 15819 / NCTC 12168 / Alc 37) (Ochrobactrum anthropi) protein is Acetyl-coenzyme A carboxylase carboxyl transferase subunit alpha.